Reading from the N-terminus, the 243-residue chain is tRNA pseudouridine synthase A (243 aa).

Asp53 functions as the Nucleophile in the catalytic mechanism. Tyr111 provides a ligand contact to substrate.

Belongs to the tRNA pseudouridine synthase TruA family. As to quaternary structure, homodimer.

It catalyses the reaction uridine(38/39/40) in tRNA = pseudouridine(38/39/40) in tRNA. In terms of biological role, formation of pseudouridine at positions 38, 39 and 40 in the anticodon stem and loop of transfer RNAs. The chain is tRNA pseudouridine synthase A from Chlorobium chlorochromatii (strain CaD3).